The following is a 188-amino-acid chain: uncharacterized protein (188 aa).

It localises to the plastid. It is found in the cyanelle. This is an uncharacterized protein from Cyanophora paradoxa.